The chain runs to 854 residues: Glucans biosynthesis glucosyltransferase H (854 aa).

The next 7 membrane-spanning stretches (helical) occupy residues 155-175, 209-229, 528-548, 583-603, 619-639, 671-691, and 695-715; these read ILLA…KTIL, ILVL…TALM, VFLT…FLVL, IALF…SVIL, FLSL…RMLF, FVRH…MAWL, and FLWW…VSVY.

This sequence belongs to the glycosyltransferase 2 family. OpgH subfamily.

Its subcellular location is the cell inner membrane. It participates in glycan metabolism; osmoregulated periplasmic glucan (OPG) biosynthesis. Involved in the biosynthesis of osmoregulated periplasmic glucans (OPGs). This is Glucans biosynthesis glucosyltransferase H from Pectobacterium atrosepticum (strain SCRI 1043 / ATCC BAA-672) (Erwinia carotovora subsp. atroseptica).